The primary structure comprises 466 residues: MSVVPVADVLQGRVAVDQEVTVRGWVRTRRDSKAGISFLAVYDGSCFDPVQAVINNSLPNYNEEVLHLTTGCSVVVTGKVVASPGQGQSFEIQATKVEVAGWVEDPDTYPMAAKRHSIEYLREVAHLRPRTNLIGAVARVRHTLAQALHRFFDEQGFFWVSTPLITASDTEGAGEMFRVSTLDLENLPRNDQGRVDFDKDFFGKESFLTVSGQLNGETYACALSKIYTFGPTFRAENSNTSRHLAEFWMLEPEVAFADLEDNARLAEAMLKYVFNAVLEERADDMKFFAERVDKDAIARLERFVSTDFAQVDYTDAVAILERCGKTFENPVFWGVDLSSEHERYLAEEHFKAPVVVKNYPKEIKAFYMRLNEDGKTVAAMDVLAPGIGEIIGGSQREERLDVLDARMAEMGLNKEDYWWYRDLRRYGTVPHSGFGLGFERLIAYVTGVQNVRDVIPFPRTPRNASF.

This sequence belongs to the class-II aminoacyl-tRNA synthetase family. In terms of assembly, homodimer.

It localises to the cytoplasm. The catalysed reaction is tRNA(Asn) + L-asparagine + ATP = L-asparaginyl-tRNA(Asn) + AMP + diphosphate + H(+). The polypeptide is Asparagine--tRNA ligase (Salmonella typhimurium (strain LT2 / SGSC1412 / ATCC 700720)).